A 32-amino-acid chain; its full sequence is Fimbrin sef21 (32 aa).

It localises to the fimbrium. The sequence is that of Fimbrin sef21 from Salmonella enteritidis.